The chain runs to 181 residues: ADP-ribosylation factor 1 (181 aa).

Position 2 is an N-acetylglycine; alternate (Gly-2). Residue Gly-2 is the site of N-myristoyl glycine; alternate attachment. Residues 3-16 (NIFANLFKGLFGKK) are important for the stable binding to the membranes. Residues 24–32 (GLDAAGKTT), 126–129 (NKQD), and Ala-160 contribute to the GTP site.

Belongs to the small GTPase superfamily. Arf family. As to quaternary structure, interacts (when activated) with GGA1, GGA2 and GGA3; the interaction is required for proper subcellular location of GGA1, GGA2 and GGA3. Interacts with ARHGAP21, ASAP2, GGA1, HERC1, PRKCABP, PIP5K1B, TMED2, PSCD2, TMED10 and GRIA2. Interacts with ARFGAP1, which hydrolyzes GTP and thus, regulates its function. Interacts with PI4KB in the Golgi complex. Interacts with NCS1/FREQ in the Golgi and at the plasma membrane. Interacts with PLEKHA3. Interacts with PLEKHA8; the interaction, together with phosphatidylinositol 4-phosphate binding, is required for FAPP2-mediated glucosylceramide transfer activity. Interacts (activated) with PICK1 (via PDZ domain); the interaction blocks Arp2/3 complex inhibition. Interacts with IQSEC1. Interacts with C9orf72.

The protein resides in the golgi apparatus membrane. It is found in the synapse. The protein localises to the synaptosome. Its subcellular location is the postsynaptic density. The enzyme catalyses GTP + H2O = GDP + phosphate + H(+). Its activity is regulated as follows. Alternates between an inactive GDP-bound form and an active GTP-bound form. Activated by guanine nucleotide-exchange factors (GEFs) and inactivated by GTPase-activating proteins (GAPs). In terms of biological role, small GTPase involved in protein trafficking between different compartments. Modulates vesicle budding and uncoating within the Golgi complex. In its GTP-bound form, triggers the recruitment of coatomer proteins to the Golgi membrane. The hydrolysis of ARF1-bound GTP, which is mediated by ARFGAPs proteins, is required for dissociation of coat proteins from Golgi membranes and vesicles. The GTP-bound form interacts with PICK1 to limit PICK1-mediated inhibition of Arp2/3 complex activity; the function is linked to AMPA receptor (AMPAR) trafficking, regulation of synaptic plasticity of excitatory synapses and spine shrinkage during long-term depression (LTD). Plays a key role in the regulation of intestinal stem cells and gut microbiota, and is essential for maintaining intestinal homeostasis. Also plays a critical role in mast cell expansion but not in mast cell maturation by facilitating optimal mTORC1 activation. The sequence is that of ADP-ribosylation factor 1 (ARF1) from Bos taurus (Bovine).